The chain runs to 379 residues: tRNA-specific 2-thiouridylase MnmA (379 aa).

ATP contacts are provided by residues alanine 23–serine 30 and leucine 49. Cysteine 117 serves as the catalytic Nucleophile. Residues cysteine 117 and cysteine 214 are joined by a disulfide bond. Glycine 141 is a binding site for ATP. Residues arginine 163–glutamine 165 are interaction with tRNA. Cysteine 214 serves as the catalytic Cysteine persulfide intermediate.

It belongs to the MnmA/TRMU family.

The protein localises to the cytoplasm. The catalysed reaction is S-sulfanyl-L-cysteinyl-[protein] + uridine(34) in tRNA + AH2 + ATP = 2-thiouridine(34) in tRNA + L-cysteinyl-[protein] + A + AMP + diphosphate + H(+). In terms of biological role, catalyzes the 2-thiolation of uridine at the wobble position (U34) of tRNA, leading to the formation of s(2)U34. The chain is tRNA-specific 2-thiouridylase MnmA from Cereibacter sphaeroides (strain ATCC 17029 / ATH 2.4.9) (Rhodobacter sphaeroides).